Here is a 469-residue protein sequence, read N- to C-terminus: Acetyl-CoA decarbonylase/synthase complex subunit beta 2 (469 aa).

Residues cysteine 187, cysteine 190, cysteine 276, and cysteine 278 each contribute to the [Ni-Fe-S] cluster site.

The protein belongs to the CdhC family. In terms of assembly, monomer. The ACDS complex is made up of alpha, epsilon, beta, gamma and delta chains with a probable stoichiometry of (alpha(2)epsilon(2))(4)-beta(8)-(gamma(1)delta(1))(8) (Potential). Requires [Ni-Fe-S] cluster as cofactor.

The enzyme catalyses Co(I)-[corrinoid Fe-S protein] + acetyl-CoA + H(+) = methyl-Co(III)-[corrinoid Fe-S protein] + CO + CoA. Functionally, part of a complex that catalyzes the reversible cleavage of acetyl-CoA, allowing autotrophic growth from CO(2). The alpha-epsilon complex generates CO from CO(2), while the beta subunit (this protein) combines the CO with CoA and a methyl group to form acetyl-CoA. The methyl group, which is incorporated into acetyl-CoA, is transferred to the beta subunit by a corrinoid iron-sulfur protein (the gamma-delta complex). The polypeptide is Acetyl-CoA decarbonylase/synthase complex subunit beta 2 (cdhC2) (Methanocaldococcus jannaschii (strain ATCC 43067 / DSM 2661 / JAL-1 / JCM 10045 / NBRC 100440) (Methanococcus jannaschii)).